We begin with the raw amino-acid sequence, 297 residues long: tRNA pseudouridine synthase B (297 aa).

Aspartate 44 acts as the Nucleophile in catalysis.

This sequence belongs to the pseudouridine synthase TruB family. Type 1 subfamily.

The catalysed reaction is uridine(55) in tRNA = pseudouridine(55) in tRNA. Its function is as follows. Responsible for synthesis of pseudouridine from uracil-55 in the psi GC loop of transfer RNAs. The protein is tRNA pseudouridine synthase B of Corynebacterium aurimucosum (strain ATCC 700975 / DSM 44827 / CIP 107346 / CN-1) (Corynebacterium nigricans).